The sequence spans 197 residues: Rac-like GTP-binding protein RAC1 (197 aa).

13-20 contacts GTP; sequence GDGAVGKT. Residues 35 to 43 carry the Effector region motif; sequence YVPTVFDNF. Residues 60 to 64 and 118 to 121 each bind GTP; these read DTAGQ and TKLD. Cysteine 194 carries the cysteine methyl ester modification. Cysteine 194 carries S-geranylgeranyl cysteine lipidation. The propeptide at 195–197 is removed in mature form; sequence SIL.

Belongs to the small GTPase superfamily. Rho family.

The protein localises to the cytoplasm. It is found in the membrane. Its function is as follows. Inactive GDP-bound Rho GTPases reside in the cytosol, are found in a complex with Rho GDP-dissociation inhibitors (Rho GDIs), and are released from the GDI protein in order to translocate to membranes upon activation. The chain is Rac-like GTP-binding protein RAC1 (RAC1) from Lotus japonicus (Lotus corniculatus var. japonicus).